Reading from the N-terminus, the 122-residue chain is Large ribosomal subunit protein uL14 (122 aa).

Belongs to the universal ribosomal protein uL14 family. In terms of assembly, part of the 50S ribosomal subunit. Forms a cluster with proteins L3 and L19. In the 70S ribosome, L14 and L19 interact and together make contacts with the 16S rRNA in bridges B5 and B8.

Its function is as follows. Binds to 23S rRNA. Forms part of two intersubunit bridges in the 70S ribosome. This Shewanella halifaxensis (strain HAW-EB4) protein is Large ribosomal subunit protein uL14.